Here is a 136-residue protein sequence, read N- to C-terminus: Protein NrdI (136 aa).

The protein belongs to the NrdI family.

Its function is as follows. Probably involved in ribonucleotide reductase function. This Escherichia coli O1:K1 / APEC protein is Protein NrdI.